The chain runs to 423 residues: POU domain, class 5, transcription factor 1.3 (423 aa).

The disordered stretch occupies residues 85 to 211 (GALSSGDPSP…GSGNEEDGTT (127 aa)). Basic and acidic residues predominate over residues 94 to 110 (PEGRNEEDHGSISEERS). Composition is skewed to polar residues over residues 111–120 (SGTPSPNSPM), 156–173 (PQQS…GASN), and 194–203 (PSPNNASFGS). Positions 207–281 (EDGTTLEEME…LLEQWLGEAE (75 aa)) constitute a POU-specific domain. Residues 301-360 (KRKMRTCFDSVLKGRLEGHFMCNQKPGARELAEIAKELGLEKDVVRVWFCNRRQKEKSKS) constitute a DNA-binding region (homeobox).

This sequence belongs to the POU transcription factor family. Class-5 subfamily. Interacts with the transcription factors tcf7l1/tcf3 and vegt.

It localises to the nucleus. Transcription factor that binds to the octamer motif (5'-ATTTGCAT-3'). Antagonizes the activity of nodal/activin signaling during gastrulation to suppress mesendoderm formation. Acts maternally to inhibit vegt and beta-catenin-activated gene transcription, probably by forming a transcriptional repression complex on the promoters of target genes. Binds to an octamer motif in interspersed RNA. This chain is POU domain, class 5, transcription factor 1.3 (pou5f1.3), found in Xenopus tropicalis (Western clawed frog).